The primary structure comprises 239 residues: Ribonuclease PH (239 aa).

Phosphate contacts are provided by residues Arg86 and 124 to 126 (GTR).

It belongs to the RNase PH family. As to quaternary structure, homohexameric ring arranged as a trimer of dimers.

The catalysed reaction is tRNA(n+1) + phosphate = tRNA(n) + a ribonucleoside 5'-diphosphate. Functionally, phosphorolytic 3'-5' exoribonuclease that plays an important role in tRNA 3'-end maturation. Removes nucleotide residues following the 3'-CCA terminus of tRNAs; can also add nucleotides to the ends of RNA molecules by using nucleoside diphosphates as substrates, but this may not be physiologically important. Probably plays a role in initiation of 16S rRNA degradation (leading to ribosome degradation) during starvation. In Rhizobium etli (strain CIAT 652), this protein is Ribonuclease PH.